The chain runs to 351 residues: Glycerol-3-phosphate dehydrogenase [NAD(P)+] (351 aa).

NADPH is bound by residues Ser-12, Trp-13, His-33, and Lys-114. Lys-114, Gly-145, and Ser-147 together coordinate sn-glycerol 3-phosphate. Ala-149 is an NADPH binding site. Sn-glycerol 3-phosphate is bound by residues Lys-200, Asp-253, Ser-263, Arg-264, and Asn-265. Catalysis depends on Lys-200, which acts as the Proton acceptor. Residue Arg-264 participates in NADPH binding. NADPH is bound by residues Val-288 and Glu-290.

Belongs to the NAD-dependent glycerol-3-phosphate dehydrogenase family.

It is found in the cytoplasm. It catalyses the reaction sn-glycerol 3-phosphate + NAD(+) = dihydroxyacetone phosphate + NADH + H(+). The enzyme catalyses sn-glycerol 3-phosphate + NADP(+) = dihydroxyacetone phosphate + NADPH + H(+). The protein operates within membrane lipid metabolism; glycerophospholipid metabolism. In terms of biological role, catalyzes the reduction of the glycolytic intermediate dihydroxyacetone phosphate (DHAP) to sn-glycerol 3-phosphate (G3P), the key precursor for phospholipid synthesis. The polypeptide is Glycerol-3-phosphate dehydrogenase [NAD(P)+] (Lacticaseibacillus casei (strain BL23) (Lactobacillus casei)).